The sequence spans 563 residues: Lipase 1 (563 aa).

Positions 1–19 (MVSKTFFLAAALNVVGTLA) are cleaved as a signal peptide. The residue at position 20 (Q20) is a Pyrrolidone carboxylic acid. C80 and C124 are joined by a disulfide. The active-site Acyl-ester intermediate is the S236. C295 and C307 are joined by a disulfide. N-linked (GlcNAc...) asparagine glycosylation is present at N302. E373 (charge relay system) is an active-site residue. The N-linked (GlcNAc...) asparagine glycan is linked to N383. H482 acts as the Charge relay system in catalysis.

This sequence belongs to the type-B carboxylesterase/lipase family. As to quaternary structure, monomer.

Its subcellular location is the secreted. It catalyses the reaction a triacylglycerol + H2O = a diacylglycerol + a fatty acid + H(+). In terms of biological role, hydrolyzes all ester bonds in triglyceride and displays a high affinity for triolein. For unsaturated substrates having long fatty acyl chains (C18:2 cis-9, cis-12 and C18:3 cis-9, cis-12, cis-15) GCL I shows higher specific activity than GCL II, whereas GCL II shows higher specific activity against saturated substrates having short fatty acid chains (C8, C10, C12 and C14). This is Lipase 1 (LIP1) from Geotrichum candidum (Oospora lactis).